Consider the following 474-residue polypeptide: PRAME family member 2 (474 aa).

The LRR 1; degenerate repeat unit spans residues 97–124 (RWKLQVLDLRDVDENFWARWPGAWALSC). An LRR 2; degenerate repeat occupies 179–203 (HLCCSKLVNYLTPIKYLRKSLKIIY). The LRR 3; degenerate repeat unit spans residues 204 to 230 (INSIGELEIHNTCWPHLIRKLYCYLKE). The LRR 4; degenerate repeat unit spans residues 231 to 265 (MKTLCKLVFSRCHHYTSDNELEGWLVTRFTSVFLR). 5 LRR repeats span residues 266–291 (LEHLQLLKIKLITFFSGHLEQLIRCL), 292–323 (QNPLENLELTCGNLLEEDLKCLSQFPSLGYLK), 324–342 (HLNLSYVLLFRISLEPLGA), 348–375 (AASLETLVLEGCQIHYSQLSAILPGLSC), and 376–400 (CSQLTTFYFGSNCMSIDALKDLLRH).

It belongs to the PRAME family.

The protein is PRAME family member 2 of Homo sapiens (Human).